We begin with the raw amino-acid sequence, 336 residues long: Phenylalanine--tRNA ligase alpha subunit (336 aa).

Glutamate 255 contacts Mg(2+).

Belongs to the class-II aminoacyl-tRNA synthetase family. Phe-tRNA synthetase alpha subunit type 1 subfamily. Tetramer of two alpha and two beta subunits. Mg(2+) is required as a cofactor.

It localises to the cytoplasm. It carries out the reaction tRNA(Phe) + L-phenylalanine + ATP = L-phenylalanyl-tRNA(Phe) + AMP + diphosphate + H(+). The sequence is that of Phenylalanine--tRNA ligase alpha subunit from Gemmatimonas aurantiaca (strain DSM 14586 / JCM 11422 / NBRC 100505 / T-27).